A 1159-amino-acid chain; its full sequence is Syntaxin-binding protein 5-like (1159 aa).

Residues 1 to 37 (MKKFRKVLDGLTTSSPVNPGGSPGCGSAAGTPSAAPT) are disordered. The span at 25-37 (CGSAAGTPSAAPT) shows a compositional bias: low complexity. WD repeat units lie at residues 67-108 (TALA…CHSQ), 115-154 (VLQMQFLINEGALVTACADDTLHLWSLRQRLPAILHSLKF), 159-195 (ITFCHLPFQSKWLYVGTERGNTHIVNIESFILSGYVI), 214-248 (HLSDSPKDEGKLLIGFESGTIVMWDLRAKRADFRI), 254-286 (IHSVSWHHEGRQFMCSHSDGSLSMWNMRNTAKP), 307-350 (PILK…KAIT), 358-392 (IVDFMVLCETPYLNEVQEPYAVVVLLEKDFVVVDL), 414-491 (TCTA…YKLK), 519-628 (QMIS…ELVV), and 642-703 (TCLD…STSG). 2 disordered regions span residues 571 to 604 (SDTENTPCFSDPSGHSPQPQPPSPRSNTPDSVRD) and 690 to 770 (LTRS…KAQS). Composition is skewed to polar residues over residues 699–713 (QSTSGLTELSDNQVS) and 721–739 (SPTSDHVNGHCTSPTSQPC). 4 WD repeats span residues 808-865 (VTTL…TGTV), 874-946 (RFGF…QACL), 951-995 (ITES…LDVS), and 1009-1032 (CFTNGGQALYLCSPTEIQRITYSQ). In terms of domain architecture, v-SNARE coiled-coil homology spans 1094-1154 (GIEGMKAAAG…HELMLKCKDK (61 aa)).

This sequence belongs to the WD repeat L(2)GL family.

The protein resides in the cytoplasm. The protein localises to the cell membrane. It localises to the membrane. Functionally, may play a role in vesicle trafficking and exocytosis. This chain is Syntaxin-binding protein 5-like (stxbp5l), found in Danio rerio (Zebrafish).